Here is a 188-residue protein sequence, read N- to C-terminus: uncharacterized protein (188 aa).

Phosphoserine is present on serine 14. A disordered region spans residues 165 to 188 (RQAMAAKRNRFRKNVRKLPNKKKH). A compositionally biased stretch (basic residues) spans 171-188 (KRNRFRKNVRKLPNKKKH).

The protein resides in the nucleus. It is found in the nucleolus. This is an uncharacterized protein from Schizosaccharomyces pombe (strain 972 / ATCC 24843) (Fission yeast).